Here is a 288-residue protein sequence, read N- to C-terminus: MDKIIKTLSKSGHFRAFVLDSTETVKTAQEKHDTMASSTVALGRTLIANQILAVNEKGDTKITLKILASGAVGAIISVANTKGQVKGYIQNPDLDYKRTATGEVIVGPLVGNGQFLVITDYGTGHPYNSMTPLISGEIGEDFAYFLTDSQQTPSAVGLNVLLDEEDKVKVAGGFLLQVLPGATEVEIARFEKRIQEMPAISSLLASENHIEALLSAIYGDDDFKRLSEEEIGFVCDCSKDRFLDALASLPKADLQEMKEEDKGVDITCQFCQTHYHFDENDLEELING.

Intrachain disulfides connect Cys-235-Cys-237 and Cys-268-Cys-271.

The protein belongs to the HSP33 family. In terms of processing, under oxidizing conditions two disulfide bonds are formed involving the reactive cysteines. Under reducing conditions zinc is bound to the reactive cysteines and the protein is inactive.

The protein localises to the cytoplasm. Functionally, redox regulated molecular chaperone. Protects both thermally unfolding and oxidatively damaged proteins from irreversible aggregation. Plays an important role in the bacterial defense system toward oxidative stress. This Streptococcus suis (strain 98HAH33) protein is 33 kDa chaperonin.